The following is a 604-amino-acid chain: uncharacterized protein (604 aa).

The tract at residues 239 to 259 (ELNSPQELNDPQELNNSQDLN) is disordered.

This is an uncharacterized protein from Escherichia coli (strain K12).